A 238-amino-acid polypeptide reads, in one-letter code: 1-(5-phosphoribosyl)-5-[(5-phosphoribosylamino)methylideneamino] imidazole-4-carboxamide isomerase (238 aa).

Aspartate 8 serves as the catalytic Proton acceptor. The active-site Proton donor is the aspartate 129.

It belongs to the HisA/HisF family.

It localises to the cytoplasm. It catalyses the reaction 1-(5-phospho-beta-D-ribosyl)-5-[(5-phospho-beta-D-ribosylamino)methylideneamino]imidazole-4-carboxamide = 5-[(5-phospho-1-deoxy-D-ribulos-1-ylimino)methylamino]-1-(5-phospho-beta-D-ribosyl)imidazole-4-carboxamide. Its pathway is amino-acid biosynthesis; L-histidine biosynthesis; L-histidine from 5-phospho-alpha-D-ribose 1-diphosphate: step 4/9. This chain is 1-(5-phosphoribosyl)-5-[(5-phosphoribosylamino)methylideneamino] imidazole-4-carboxamide isomerase, found in Myxococcus xanthus (strain DK1622).